The following is an 803-amino-acid chain: Chromatin structure-remodeling complex subunit rsc1 (803 aa).

The 109-residue stretch at 9–117 (ADDKKLQRVL…EFCIQQLRTF (109 aa)) folds into the Bromo 1 domain. A compositionally biased stretch (polar residues) spans 128-154 (WPNTDSPSATTSSPISRNPEYSVSPPN). Positions 128-160 (WPNTDSPSATTSSPISRNPEYSVSPPNGSKFVK) are disordered. Ser168 is subject to Phosphoserine. The disordered stretch occupies residues 174–206 (EEDSDVKGRSMVGRDGRYKSEDLKRRKLQPSSK). Basic and acidic residues predominate over residues 178–197 (DVKGRSMVGRDGRYKSEDLK). The region spanning 206 to 316 (KPLSSLEARA…NYLADVLRLE (111 aa)) is the Bromo 2 domain. Phosphoserine is present on residues Ser331 and Ser334. Residues 351–469 (TLLNVGDWVL…DDTKQFSKIK (119 aa)) form the BAH domain. Polar residues predominate over residues 512 to 525 (GLPSPATTDSNTHM). The segment at 512 to 616 (GLPSPATTDS…RTSTKSTSPI (105 aa)) is disordered. Residues 526 to 539 (LPSQGSLLPPSSIS) are compositionally biased toward low complexity. 2 stretches are compositionally biased toward polar residues: residues 540-553 (ETKSFSTKASTPLS) and 605-615 (IMRTSTKSTSP).

It belongs to the RSC1 family. As to quaternary structure, component of the RSC complex composed of at least arp9, arp42, rsc1, rsc4, rsc7, rsc9, rsc58, sfh1, snf21, ssr1, ssr2, ssr3 and ssr4. The complex interacts with histone and histone variant components of centromeric chromatin.

The protein localises to the nucleus. Component of the chromatin structure remodeling complex (RSC), which is involved in transcription regulation and nucleosome positioning. Controls particularly membrane and organelle development genes. This is Chromatin structure-remodeling complex subunit rsc1 (rsc1) from Schizosaccharomyces pombe (strain 972 / ATCC 24843) (Fission yeast).